A 423-amino-acid polypeptide reads, in one-letter code: Pentamidine resistance factor, mitochondrial (423 aa).

The helical transmembrane segment at 199–219 (PVFFTLVFIFEEVSVLIFTFF) threads the bilayer.

In terms of assembly, interacts with COX18. This interaction may be essential for its insertion into mitochondrial inner membrane.

The protein resides in the mitochondrion inner membrane. In terms of biological role, probably involved in mitochondrial export. Confers resistance to the anti-pneumocystis carinii drug pentamidine. May act by the removal of pentamidine, or its damage targets, from the matrix by an active-transport mechanism. This Saccharomyces cerevisiae (strain ATCC 204508 / S288c) (Baker's yeast) protein is Pentamidine resistance factor, mitochondrial (PNT1).